A 153-amino-acid chain; its full sequence is Cytochrome c-type biogenesis protein CcmE (153 aa).

Over 1–7 the chain is Cytoplasmic; it reads MKPRHKR. A helical; Signal-anchor for type II membrane protein transmembrane segment spans residues 8 to 28; the sequence is LAIAGGVLVAVGAIATLVLNA. The Periplasmic portion of the chain corresponds to 29 to 153; sequence FQSNLVFFYS…SSQAATGDPR (125 aa). Heme contacts are provided by histidine 120 and tyrosine 124. Residues 130 to 153 form a disordered region; that stretch reads AEALKRAKEGGQMQSSQAATGDPR. Residues 141 to 153 are compositionally biased toward polar residues; that stretch reads QMQSSQAATGDPR.

Belongs to the CcmE/CycJ family.

The protein resides in the cell inner membrane. Functionally, heme chaperone required for the biogenesis of c-type cytochromes. Transiently binds heme delivered by CcmC and transfers the heme to apo-cytochromes in a process facilitated by CcmF and CcmH. The polypeptide is Cytochrome c-type biogenesis protein CcmE (Leptothrix cholodnii (strain ATCC 51168 / LMG 8142 / SP-6) (Leptothrix discophora (strain SP-6))).